Consider the following 490-residue polypeptide: tRNA-guanine(15) transglycosylase (490 aa).

Residue D92 is the Nucleophile of the active site. Positions 127 and 195 each coordinate substrate. Residues C278, C280, and C283 each contribute to the Zn(2+) site.

It belongs to the archaeosine tRNA-ribosyltransferase family. Requires Zn(2+) as cofactor.

It catalyses the reaction guanosine(15) in tRNA + 7-cyano-7-deazaguanine = 7-cyano-7-carbaguanosine(15) in tRNA + guanine. It functions in the pathway tRNA modification; archaeosine-tRNA biosynthesis. Exchanges the guanine residue with 7-cyano-7-deazaguanine (preQ0) at position 15 in the dihydrouridine loop (D-loop) of archaeal tRNAs. The protein is tRNA-guanine(15) transglycosylase of Haloarcula marismortui (strain ATCC 43049 / DSM 3752 / JCM 8966 / VKM B-1809) (Halobacterium marismortui).